Consider the following 851-residue polypeptide: DNA mismatch repair protein MutS (851 aa).

ATP is bound at residue 614–621 (GPNMGGKS).

It belongs to the DNA mismatch repair MutS family.

This protein is involved in the repair of mismatches in DNA. It is possible that it carries out the mismatch recognition step. This protein has a weak ATPase activity. The protein is DNA mismatch repair protein MutS of Yersinia pestis.